We begin with the raw amino-acid sequence, 348 residues long: 11-beta-hydroxysteroid dehydrogenase A (348 aa).

A helical; Signal-anchor for type II membrane protein membrane pass occupies residues 10-30; that stretch reads LIAPPFTFFFLLFFLPPFQIF. The Proline-knob motif lies at 13 to 26; sequence PPFTFFFLLFFLPP. Residues 54–80, Asp105, and 132–135 each bind NADP(+); these read GASS…AARR and NAGI. A substrate-binding site is contributed by Ser184. The active-site Proton acceptor is Tyr197. NADP(+) is bound by residues 197-201 and Lys201; that span reads YNASK.

Belongs to the short-chain dehydrogenases/reductases (SDR) family. As to expression, expressed in seeds (at protein level). Not expressed in stem, leaf or root (at protein level).

It localises to the lipid droplet. The protein localises to the membrane. The catalysed reaction is an 11beta-hydroxysteroid + NADP(+) = an 11-oxosteroid + NADPH + H(+). It catalyses the reaction an 11beta-hydroxysteroid + NAD(+) = an 11-oxosteroid + NADH + H(+). The enzyme catalyses corticosterone + NADP(+) = 11-dehydrocorticosterone + NADPH + H(+). It carries out the reaction corticosterone + NAD(+) = 11-dehydrocorticosterone + NADH + H(+). The catalysed reaction is 17beta-estradiol + NADP(+) = estrone + NADPH + H(+). It catalyses the reaction 17beta-estradiol + NAD(+) = estrone + NADH + H(+). Has dehydrogenase activity against corticosterone (11 beta-hydroxysteroid) and estradiol (17 beta-hydroxysteroid), with higher activity against estradiol. Possesses higher dehydrogenase activity with NADP(+) than NAD(+) regardless of the sterol substrate. May be involved in signal transduction regulated by various sterols. This Sesamum indicum (Oriental sesame) protein is 11-beta-hydroxysteroid dehydrogenase A.